Consider the following 51-residue polypeptide: Large ribosomal subunit protein eL39 (51 aa).

This sequence belongs to the eukaryotic ribosomal protein eL39 family. Part of the 50S ribosomal subunit.

The chain is Large ribosomal subunit protein eL39 from Thermococcus kodakarensis (strain ATCC BAA-918 / JCM 12380 / KOD1) (Pyrococcus kodakaraensis (strain KOD1)).